A 326-amino-acid chain; its full sequence is Metallophosphoesterase domain-containing protein 1 (326 aa).

It belongs to the UPF0046 family.

May have metallophosphoesterase activity (in vitro). This chain is Metallophosphoesterase domain-containing protein 1 (Mpped1), found in Mus musculus (Mouse).